A 785-amino-acid chain; its full sequence is Rho-GTPase-activating protein RGD3 (785 aa).

Ser-2 carries the N-acetylserine modification. One can recognise an F-BAR domain in the interval 31 to 463 (ISLRNTYWTK…PQETANADVR (433 aa)). A disordered region spans residues 313–340 (SNGNAGNRKKKSYGELTHSDNEHEEKSN). Residues 329 to 339 (THSDNEHEEKS) show a composition bias toward basic and acidic residues. A Rho-GAP domain is found at 520–702 (IILRQIEKEP…TFFINERTVE (183 aa)). Residues 732–785 (TAPIHSTPKPPPNDKDGHFIPRPFKTSSTPTTPERPKRKSGLFLPINVNDVPST) form a disordered region. Ser-759 carries the phosphoserine modification. Thr-760, Thr-762, and Thr-763 each carry phosphothreonine.

In terms of processing, phosphorylation at the C-terminus negatively regulates the activity and the polarized localization.

It is found in the cytoplasmic vesicle membrane. Its subcellular location is the cell membrane. It localises to the bud tip. The protein localises to the bud neck. Functionally, GTPase activating protein (GAP) for RHO3 and CDC42 that binds membranes through phosphatidylinositol 4,5-bisphosphate. Plays a key role in cell polarity. Modulates the RHO3 distribution at the plasma membrane and its polarity during growth. In Saccharomyces cerevisiae (strain ATCC 204508 / S288c) (Baker's yeast), this protein is Rho-GTPase-activating protein RGD3.